A 199-amino-acid chain; its full sequence is Protein ASYMMETRIC LEAVES 2 (199 aa).

One can recognise an LOB domain in the interval 8–109 (SPCAACKFLR…IDLSCAKSEL (102 aa)).

The protein belongs to the LOB domain-containing protein family. As to quaternary structure, homo- and heterodimer with AS1. Interacts with AS1. Part of the AS1 repressor complex composed of AS1, LBD6/AS2 and HDA6. Interacts with LFR. As to expression, expressed in young shoots, roots, stems, leaves, flowers and adaxial domains of cotyledonary and leaves primordia.

Its subcellular location is the nucleus. Functionally, negative regulator of cell proliferation in the adaxial side of leaves. Regulates the formation of a symmetric lamina and the establishment of venation. Positively regulates LATERAL ORGAN BOUNDARIES (LOB) within the shoot apex, and the class III HD-ZIP genes REV, PHB, and PHV. Interacts directly with ASYMMETRIC LEAVES 1 (AS1) to repress the knox homeobox genes KNAT1, KNAT2, and KNAT6 and the abaxial determinants ARF3, KAN2 and YAB5. May act in parallel with the RDR6-SGS3-AGO7 pathway, an endogenous RNA silencing pathway, to regulate the leaf morphogenesis. Required for the binding of AS1 to the KNOX genes. Involved in leaf polarity establishment by functioning cooperatively with RH10 or RID2 to repress abaxial genes ARF3, ARF4, KAN1, KAN2, YAB1 and YAB5, and the knox homeobox genes KNAT1, KNAT2, KNAT6, and STM to promote adaxial development in leaf primordia at shoot apical meristems at high temperatures. This is Protein ASYMMETRIC LEAVES 2 from Arabidopsis thaliana (Mouse-ear cress).